Here is a 231-residue protein sequence, read N- to C-terminus: DNA repair protein RecO (231 aa).

This sequence belongs to the RecO family.

Its function is as follows. Involved in DNA repair and RecF pathway recombination. The protein is DNA repair protein RecO of Coxiella burnetii (strain CbuK_Q154) (Coxiella burnetii (strain Q154)).